The sequence spans 961 residues: Probable exosome complex exonuclease RRP44 (961 aa).

The PINc domain maps to 73–188 (HALIVDSTSL…LVFDEDSKKR (116 aa)). A CSD1 domain is found at 232–338 (IFDEYLSHDR…DEENDDENDE (107 aa)). Residues 322-346 (ADDMGNEDEENDDENDEPKAKKSKK) form a disordered region. Acidic residues predominate over residues 325–337 (MGNEDEENDDEND). Positions 381 to 447 (LFCPAERLIP…ENEVLLLEHD (67 aa)) constitute a CSD2 domain. The RNB domain occupies 479 to 809 (RVDLRDLTIC…IVHRLLAAAI (331 aa)).

This sequence belongs to the RNR ribonuclease family. Component of the RNA exosome complex. As to expression, ubiquitously expressed.

Its subcellular location is the nucleus. The protein resides in the nucleoplasm. Functionally, putative catalytic component of the RNA exosome complex which has 3'-&gt;5' exoribonuclease activity and participates in a multitude of cellular RNA processing and degradation events. Has both 3'-5' exonuclease and endonuclease activities. Involved in regulation of antisense ribosomal siRNA production. This chain is Probable exosome complex exonuclease RRP44 (dis-3), found in Caenorhabditis elegans.